We begin with the raw amino-acid sequence, 211 residues long: Small ribosomal subunit protein uS3 (211 aa).

Residues 16–85 (IDEYFKTKLV…NPQIEVKQVE (70 aa)) form the KH type-2 domain.

The protein belongs to the universal ribosomal protein uS3 family. Part of the 30S ribosomal subunit.

In terms of biological role, binds the lower part of the 30S subunit head. This Methanococcus maripaludis (strain C7 / ATCC BAA-1331) protein is Small ribosomal subunit protein uS3.